The primary structure comprises 353 residues: O-antigen chain mannosyltransferase RfbU (353 aa).

The protein belongs to the glycosyltransferase group 1 family. Glycosyltransferase 4 subfamily.

The enzyme catalyses alpha-L-rhamnosyl-(1-&gt;3)-alpha-D-galactosyl-1-diphospho-di-trans,octa-cis-undecaprenol + GDP-alpha-D-mannose = alpha-D-Man-(1-&gt;4)-alpha-L-Rha-(1-&gt;3)-alpha-D-Gal-di-trans,octa-cis-undecaprenyl diphosphate + GDP + H(+). The protein operates within bacterial outer membrane biogenesis; LPS O-antigen biosynthesis. Functionally, mannosyltransferase involved in the biosynthesis of the repeat unit of the lipopolysaccharide (LPS) O-antigen region. Catalyzes the addition of a mannose to the rhamnosyl-galactosyl-undecaprenyl diphosphate intermediate. The protein is O-antigen chain mannosyltransferase RfbU of Salmonella typhimurium (strain LT2 / SGSC1412 / ATCC 700720).